The sequence spans 443 residues: MGVFAVTKVSEGPVRPSAATPSETLPLAWVDRYPTHRGLVESVHIYLRRDDAAVEAPCADGGVIVEGKKKNNKPAAAVVRGALADALVHYYPFAGRIVEDERSPGRPAVLCSGEGVYFVEAAANCTLADVNHLERPLLLSKEDLVPCPTPEQWPVEPHNSLAMIQVTTFTCGGFVIGLRTNHAVADGTGAAQFMNAVGDLARGLPEPRVKPIWARDRFPDPDIKPGPLPELPVLPLQYIAFDFPAAYLGKLKAQYAATAGASKICSAFDIVIAKLWQCRTRAIAADPAAAVKLCFFASARQVLGLETGYWGNAIFPVKVSAAAGEVAASSVIELVGVVREAKRRMAGECLRWAEGRTGGADPFQMTFDYESVYVSDWSKLGFNDVDYGYGAPSAAGPLVNCDLISSVIVMRAPAPLAGTRLLASCVTKEHADDFAARMREDLV.

Residues histidine 182 and aspartate 386 each act as proton acceptor in the active site.

This sequence belongs to the plant acyltransferase family.

In terms of biological role, involved in the incorporation of ferulate into the cell wall. May act as arabinoxylan feruloyl transferase. May function as p-coumaroyl-CoA transferase involved in glucuronoarabinoxylan modification. This is Acyl transferase 10 from Oryza sativa subsp. japonica (Rice).